The chain runs to 353 residues: Lipase ZK262.3 (353 aa).

The first 22 residues, 1–22 (MPKNLRFSVFLLFLLCINSVFG), serve as a signal peptide directing secretion. N-linked (GlcNAc...) asparagine glycosylation is found at Asn-32 and Asn-64. The active-site Nucleophile is the Ser-163. Asp-221 serves as the catalytic Charge relay system. Asn-267 is a glycosylation site (N-linked (GlcNAc...) asparagine). Cysteines 277 and 288 form a disulfide. Catalysis depends on His-306, which acts as the Charge relay system.

Belongs to the AB hydrolase superfamily. Lipase family.

It localises to the secreted. Probable lipase. The polypeptide is Lipase ZK262.3 (Caenorhabditis elegans).